The following is a 113-amino-acid chain: Hydrogenase maturation factor HypA (113 aa).

Ni(2+) is bound at residue histidine 2. Residues cysteine 73, cysteine 76, cysteine 89, and cysteine 92 each coordinate Zn(2+).

Belongs to the HypA/HybF family.

In terms of biological role, involved in the maturation of [NiFe] hydrogenases. Required for nickel insertion into the metal center of the hydrogenase. The chain is Hydrogenase maturation factor HypA from Cereibacter sphaeroides (Rhodobacter sphaeroides).